We begin with the raw amino-acid sequence, 185 residues long: uncharacterized protein (185 aa).

In terms of domain architecture, Nudix hydrolase spans L39 to A177. A Nudix box motif is present at residues G77–G99. Residues E93 and E97 each coordinate Mg(2+).

The protein belongs to the Nudix hydrolase family. Requires Mg(2+) as cofactor.

This is an uncharacterized protein from Rhodococcus erythropolis (Arthrobacter picolinophilus).